The sequence spans 98 residues: Keratin-associated protein 3-3 (98 aa).

N-acetylalanine is present on alanine 2. Tandem repeats lie at residues 3–7 (CCAPL), 8–12 (CCSAR), and 47–51 (CCDNC). Positions 3–59 (CCAPLCCSARTSPATTICSSDKFCRCGVCLPSTCPHTVWLLEPTCCDNCPPPCHIPQ) are 3 X 5 AA repeats of C-C-X(3).

It belongs to the KRTAP type 3 family. Interacts with hair keratins.

In the hair cortex, hair keratin intermediate filaments are embedded in an interfilamentous matrix, consisting of hair keratin-associated proteins (KRTAP), which are essential for the formation of a rigid and resistant hair shaft through their extensive disulfide bond cross-linking with abundant cysteine residues of hair keratins. The matrix proteins include the high-sulfur and high-glycine-tyrosine keratins. In Bos taurus (Bovine), this protein is Keratin-associated protein 3-3.